The chain runs to 350 residues: Inhibin beta E chain (350 aa).

An N-terminal signal peptide occupies residues 1–19 (MRLPDVQLWLVLLWALVRA). A propeptide spanning residues 20–236 (QGTGSVCPSC…EPGAGRARRR (217 aa)) is cleaved from the precursor. Asn198 is a glycosylation site (N-linked (GlcNAc...) asparagine). Cystine bridges form between Cys240/Cys248, Cys247/Cys315, Cys276/Cys347, and Cys280/Cys349.

The protein belongs to the TGF-beta family. As to quaternary structure, homodimeric or heterodimeric through association with alpha and beta subunits, linked by one or more disulfide bonds. Inhibins are heterodimers of one alpha and one beta subunit. Activins are homo- or heterodimers of beta subunits only.

The protein localises to the secreted. Functionally, inhibins and activins inhibit and activate, respectively, the secretion of follitropin by the pituitary gland. Inhibins/activins are involved in regulating a number of diverse functions such as hypothalamic and pituitary hormone secretion, gonadal hormone secretion, germ cell development and maturation, erythroid differentiation, insulin secretion, nerve cell survival, embryonic axial development or bone growth, depending on their subunit composition. Inhibins appear to oppose the functions of activins. Its function is as follows. Activin E is a homodimer of INHBE secreted by the liver that plays a crucial role in regulating metabolic homeostasis particularly in lipid metabolism and energy homeostasis. Plays a central role in the regulation of adipose tissue lipolysis by preventing the influx of fatty acids from adipose tissue into the liver. Mechanistically, signals via ACVR1C to activate SMAD2/3 signaling, suppressing PPARG target genes in adipose tissue, thereby reducing liver lipid content and improving glycemic control. Induces beige adipocyte formation and thermogenesis in response to cold exposure. This Homo sapiens (Human) protein is Inhibin beta E chain (INHBE).